A 353-amino-acid polypeptide reads, in one-letter code: Protein AC18 (353 aa).

It is found in the host nucleus. The protein localises to the host cytoplasm. Functionally, may play a role in occlusion-derived virions (ODV) formation and/or regulation of late viral gene expression. The sequence is that of Protein AC18 (DA41) from Autographa californica nuclear polyhedrosis virus (AcMNPV).